A 539-amino-acid polypeptide reads, in one-letter code: Glucose-6-phosphate isomerase (539 aa).

Residue Glu349 is the Proton donor of the active site. Catalysis depends on residues His380 and Lys508. The tract at residues 519 to 539 is disordered; it reads ESGASGQHDPSTAGLIQRLKR.

It belongs to the GPI family.

It localises to the cytoplasm. It carries out the reaction alpha-D-glucose 6-phosphate = beta-D-fructose 6-phosphate. It participates in carbohydrate biosynthesis; gluconeogenesis. Its pathway is carbohydrate degradation; glycolysis; D-glyceraldehyde 3-phosphate and glycerone phosphate from D-glucose: step 2/4. In terms of biological role, catalyzes the reversible isomerization of glucose-6-phosphate to fructose-6-phosphate. This Caulobacter vibrioides (strain ATCC 19089 / CIP 103742 / CB 15) (Caulobacter crescentus) protein is Glucose-6-phosphate isomerase.